The primary structure comprises 431 residues: MVVQNSPVSSVHTANFSERGSNTRTMTYKNKLTVCFDDILKVGAEMMMQQQLKNVQLDSYLVNGFSQSQQKLLKEKVKLFHGILDDLETSLSQSSSYLETLTALGKEKEKEREEAEKKRAEQENMRKVREQEELKKRQELEEASQQQQLQQNSKEKNGLGLNFSTTAPANTTDANGSKENYQELGSLQSSSQTQLENANAANNGAAFSPLTTTRIQSQQAQPSDVMFNDLNSMDISMFSGLDSTGFDSTAFNATVDETKGFDDNDSGNNYNDINISSIENNINNNINSTKNGKDNNNESNKNNNGDEKNKNNNEDNENNNNSSEKNNNNNNNNNNNNDDNGNNNNNNSGNDNNNTTNNDSNNKNNSITTGNDNENIVNNDLPTTVVSNPGDNPPPADNGEEYLTLNDFNDLNIDWSTTGDNGELDLSGFNI.

Position 6 is a phosphoserine (Ser6). The span at 105–140 shows a compositional bias: basic and acidic residues; sequence GKEKEKEREEAEKKRAEQENMRKVREQEELKKRQEL. The segment at 105-178 is disordered; sequence GKEKEKEREE…ANTTDANGSK (74 aa). Low complexity predominate over residues 143-152; it reads ASQQQQLQQN. Positions 162-178 are enriched in polar residues; it reads NFSTTAPANTTDANGSK. Ser208 is modified (phosphoserine; by CDK8). The disordered stretch occupies residues 284–399; the sequence is NNINSTKNGK…GDNPPPADNG (116 aa). Basic and acidic residues predominate over residues 304-313; the sequence is NGDEKNKNNN. The span at 318-365 shows a compositional bias: low complexity; the sequence is NNNNSSEKNNNNNNNNNNNNDDNGNNNNNNSGNDNNNTTNNDSNNKNN. The span at 366-387 shows a compositional bias: polar residues; sequence SITTGNDNENIVNNDLPTTVVS.

Belongs to the mediator complex subunit 2 family. As to quaternary structure, component of the Mediator complex, which is composed of at least 21 subunits that form three structurally distinct submodules. The Mediator head module contains MED6, MED8, MED11, SRB4/MED17, SRB5/MED18, ROX3/MED19, SRB2/MED20 and SRB6/MED22, the middle module contains MED1, MED4, NUT1/MED5, MED7, CSE2/MED9, NUT2/MED10, SRB7/MED21 and SOH1/MED31, and the tail module contains MED2, PGD1/MED3, RGR1/MED14, GAL11/MED15 and SIN4/MED16. The head and the middle modules interact directly with RNA polymerase II, whereas the elongated tail module interacts with gene-specific regulatory proteins.

The protein localises to the nucleus. Functionally, component of the Mediator complex, a coactivator involved in the regulated transcription of nearly all RNA polymerase II-dependent genes. Mediator functions as a bridge to convey information from gene-specific regulatory proteins to the basal RNA polymerase II transcription machinery. The Mediator complex, having a compact conformation in its free form, is recruited to promoters by direct interactions with regulatory proteins and serves for the assembly of a functional preinitiation complex with RNA polymerase II and the general transcription factors. The Mediator complex unfolds to an extended conformation and partially surrounds RNA polymerase II, specifically interacting with the unphosphorylated form of the C-terminal domain (CTD) of RNA polymerase II. The Mediator complex dissociates from the RNA polymerase II holoenzyme and stays at the promoter when transcriptional elongation begins. The sequence is that of Mediator of RNA polymerase II transcription subunit 2 (MED2) from Saccharomyces cerevisiae (strain ATCC 204508 / S288c) (Baker's yeast).